A 111-amino-acid polypeptide reads, in one-letter code: Ig kappa chain V-III region PC 7175 (111 aa).

The segment at aspartate 1–cysteine 23 is framework-1. The cysteines at positions 23 and 92 are disulfide-linked. The interval arginine 24–histidine 38 is complementarity-determining-1. Residues tryptophan 39–tyrosine 53 are framework-2. The interval leucine 54 to serine 60 is complementarity-determining-2. Residues glycine 61 to cysteine 92 are framework-3. The complementarity-determining-3 stretch occupies residues glutamine 93–threonine 101. Positions phenylalanine 102 to lysine 111 are framework-4.

This chain is Ig kappa chain V-III region PC 7175, found in Mus musculus (Mouse).